The following is a 476-amino-acid chain: Regulator of nonsense transcripts 3A (476 aa).

Residues 1–63 (MRSEKEGAGG…GGAGKPREEK (63 aa)) are disordered. Over residues 21–38 (SGREKLSALEVQFHRDSQ) the composition is skewed to basic and acidic residues. The interval 66 to 140 (ALSKVVIRRL…FDGYIFLDSK (75 aa)) is required for interaction with UPF2. Composition is skewed to basic and acidic residues over residues 250 to 304 (REEE…RGEE), 340 to 401 (GSDK…KKGS), and 410 to 437 (AMERLGRAQRCDDSPAPRKERLANKDRP). The segment at 250–476 (REEEKRRRRE…TGPEKREEAE (227 aa)) is disordered. Ser-341 bears the Phosphoserine mark. Residues 421–434 (DDSPAPRKERLANK) are required for association with EIF4A3 and ECJ core components CASC3, MAGOH and RBM8A.

Belongs to the RENT3 family. As to quaternary structure, found in a post-splicing messenger ribonucleoprotein (mRNP) complex. Associates with the exon junction complex (EJC). Interacts with UPF2 and RBM8A. Interacts with DHX34; the interaction is RNA-independent. Isoform 1 is strongly expressed in testis, uterus, muscle, fetal brain and spinal cord. Isoform 2 is strongly expressed in fetal brain and spinal cord.

It is found in the nucleus. The protein resides in the cytoplasm. In terms of biological role, involved in nonsense-mediated decay (NMD) of mRNAs containing premature stop codons by associating with the nuclear exon junction complex (EJC) and serving as link between the EJC core and NMD machinery. Recruits UPF2 at the cytoplasmic side of the nuclear envelope and the subsequent formation of an UPF1-UPF2-UPF3 surveillance complex (including UPF1 bound to release factors at the stalled ribosome) is believed to activate NMD. However, UPF3A is shown to be only marginally active in NMD as compared to UPF3B. Binds spliced mRNA upstream of exon-exon junctions. In vitro, weakly stimulates translation. The protein is Regulator of nonsense transcripts 3A (UPF3A) of Homo sapiens (Human).